The sequence spans 259 residues: Dihydroorotate dehydrogenase B (NAD(+)), electron transfer subunit (259 aa).

The FAD-binding FR-type domain occupies 1–101; it reads MKIEDCTVEE…MGPLGRGYDV (101 aa). FAD contacts are provided by residues 52 to 55, 69 to 71, and 76 to 77; these read RPIS, IYR, and GT. The [2Fe-2S] cluster site is built by C223, C228, C231, and C245.

Belongs to the PyrK family. In terms of assembly, heterotetramer of 2 PyrK and 2 PyrD type B subunits. Requires [2Fe-2S] cluster as cofactor. It depends on FAD as a cofactor.

The protein operates within pyrimidine metabolism; UMP biosynthesis via de novo pathway; orotate from (S)-dihydroorotate (NAD(+) route): step 1/1. Functionally, responsible for channeling the electrons from the oxidation of dihydroorotate from the FMN redox center in the PyrD type B subunit to the ultimate electron acceptor NAD(+). The chain is Dihydroorotate dehydrogenase B (NAD(+)), electron transfer subunit from Fusobacterium nucleatum subsp. nucleatum (strain ATCC 25586 / DSM 15643 / BCRC 10681 / CIP 101130 / JCM 8532 / KCTC 2640 / LMG 13131 / VPI 4355).